We begin with the raw amino-acid sequence, 85 residues long: Large ribosomal subunit protein bL27 (85 aa).

Residues 1-10 (MAQKKGGGST) are compositionally biased toward gly residues. Residues 1–21 (MAQKKGGGSTRNGRDSQPKML) form a disordered region.

This sequence belongs to the bacterial ribosomal protein bL27 family.

This is Large ribosomal subunit protein bL27 from Leptothrix cholodnii (strain ATCC 51168 / LMG 8142 / SP-6) (Leptothrix discophora (strain SP-6)).